The following is an 829-amino-acid chain: FAST kinase domain-containing protein 1, mitochondrial (829 aa).

Lys-346 carries the post-translational modification N6-acetyllysine. Residues 761–821 (IAIELLDVRA…KDARMDYLRE (61 aa)) enclose the RAP domain.

Belongs to the FAST kinase family. Expression detected in spleen, testis, colon, heart, smooth muscle, kidney, brain, lung, liver, brown and white adipose tissue with highest expression in heart and brown adipose tissue.

The protein resides in the mitochondrion. Involved in the down-regulation of mitochondrial MT-ND3 mRNA levels which leads to decreased respiratory complex I abundance and activity. The sequence is that of FAST kinase domain-containing protein 1, mitochondrial (Fastkd1) from Mus musculus (Mouse).